A 117-amino-acid chain; its full sequence is MKRASIVREKKYYELVEQLKDRTQDVTFSATKALSLLMLFSRYLVNYTNVESVNDINEECAKHYFNYLMKNHKRLGINLTDIKRSMHLISGLLDVDVNHYLKDFSLSNVTLWMTQER.

It is found in the cytoplasm. In terms of biological role, required for swarm cell differentiation. Plays a crucial role in regulating the degree of cell flagellation. The polypeptide is Swarming motility protein SwrAA (swrAA) (Bacillus subtilis (strain 168)).